Here is a 146-residue protein sequence, read N- to C-terminus: Large ribosomal subunit protein uL15 (146 aa).

The tract at residues 1-64 is disordered; the sequence is MELNSIKPAA…MPMHRRLPKR (64 aa). Positions 30–39 are enriched in basic residues; sequence TATKGHKGQK.

Belongs to the universal ribosomal protein uL15 family. Part of the 50S ribosomal subunit.

In terms of biological role, binds to the 23S rRNA. The polypeptide is Large ribosomal subunit protein uL15 (Geotalea daltonii (strain DSM 22248 / JCM 15807 / FRC-32) (Geobacter daltonii)).